Reading from the N-terminus, the 443-residue chain is MVKERKTELVEGFRHSVPYINTHRGKTFVIMLGGEAIEHENFSSIVNDIGLLHSLGIRLVVVYGARPQIDANLAAHHHEPLYHKNIRVTDAKTLELVKQAAGTLQLDITARLSMSLNNTPLQGAHINVVSGNFIIAQPLGVDDGVDYCHSGRIRRIDEDALHRQLESGAIVLMGPVAVSVTGESFNLTSEEIATQLAIKLKAEKMIGFCSSQGVTNDDGDIVSELFPNEAQARVEAQEEKGDYNSGTVRFLRGAVKACRSGVRRCHLISYQEDGALLQELFSRDGIGTQIVMESAEQIRRATINDIGGILELIRPLEQQGILVRRSREQLEMEIDKFTIIQRDNTTIACAALYPFPEEKIGEMACVAVHPDYRSSSRGEVLLERIAAQAKQSGLSKLFVLTTRSIHWFQERGFTPVDIDLLPESKKQLYNYQRKSKVLMADLG.

Positions 296-443 (EQIRRATIND…KSKVLMADLG (148 aa)) constitute an N-acetyltransferase domain.

Belongs to the acetyltransferase family. ArgA subfamily. As to quaternary structure, homohexamer.

It is found in the cytoplasm. The catalysed reaction is L-glutamate + acetyl-CoA = N-acetyl-L-glutamate + CoA + H(+). Its pathway is amino-acid biosynthesis; L-arginine biosynthesis; N(2)-acetyl-L-ornithine from L-glutamate: step 1/4. Feedback inhibition by L-arginine. The protein is Amino-acid acetyltransferase (argA) of Shigella flexneri.